The chain runs to 213 residues: Imidazole glycerol phosphate synthase subunit HisH (213 aa).

Residues 4–213 enclose the Glutamine amidotransferase type-1 domain; it reads SIAIVDYGMG…LYRNFVHWKP (210 aa). The active-site Nucleophile is cysteine 83. Catalysis depends on residues histidine 193 and glutamate 195.

In terms of assembly, heterodimer of HisH and HisF.

The protein localises to the cytoplasm. It catalyses the reaction 5-[(5-phospho-1-deoxy-D-ribulos-1-ylimino)methylamino]-1-(5-phospho-beta-D-ribosyl)imidazole-4-carboxamide + L-glutamine = D-erythro-1-(imidazol-4-yl)glycerol 3-phosphate + 5-amino-1-(5-phospho-beta-D-ribosyl)imidazole-4-carboxamide + L-glutamate + H(+). It carries out the reaction L-glutamine + H2O = L-glutamate + NH4(+). It participates in amino-acid biosynthesis; L-histidine biosynthesis; L-histidine from 5-phospho-alpha-D-ribose 1-diphosphate: step 5/9. Its function is as follows. IGPS catalyzes the conversion of PRFAR and glutamine to IGP, AICAR and glutamate. The HisH subunit catalyzes the hydrolysis of glutamine to glutamate and ammonia as part of the synthesis of IGP and AICAR. The resulting ammonia molecule is channeled to the active site of HisF. The polypeptide is Imidazole glycerol phosphate synthase subunit HisH (Burkholderia lata (strain ATCC 17760 / DSM 23089 / LMG 22485 / NCIMB 9086 / R18194 / 383)).